The primary structure comprises 197 residues: Imidazoleglycerol-phosphate dehydratase (197 aa).

This sequence belongs to the imidazoleglycerol-phosphate dehydratase family.

The protein localises to the cytoplasm. The catalysed reaction is D-erythro-1-(imidazol-4-yl)glycerol 3-phosphate = 3-(imidazol-4-yl)-2-oxopropyl phosphate + H2O. Its pathway is amino-acid biosynthesis; L-histidine biosynthesis; L-histidine from 5-phospho-alpha-D-ribose 1-diphosphate: step 6/9. This chain is Imidazoleglycerol-phosphate dehydratase, found in Gloeobacter violaceus (strain ATCC 29082 / PCC 7421).